Reading from the N-terminus, the 272-residue chain is sn-1 stearoyl-lipid 9-desaturase (272 aa).

The next 2 membrane-spanning stretches (helical) occupy residues 11 to 31 (INWV…FAFI) and 39 to 59 (AVGV…TLGF). The Histidine box-1 motif lies at 60–65 (HRLVTH). Positions 97–101 (HRIHH) match the Histidine box-2 motif. Residues 160-180 (IALGLLLLYLGGWSFVVWGVF) traverse the membrane as a helical segment. Positions 230–234 (HHAFQ) match the Histidine box-3 motif.

The protein belongs to the fatty acid desaturase type 2 family. The cofactor is Fe(2+).

It is found in the membrane. It catalyses the reaction a 1-octadecanoyl 2-acyl-glycerolipid + 2 reduced [2Fe-2S]-[ferredoxin] + O2 + 2 H(+) = a 1-[(9Z)-octadecenoyl]-2-acyl-glycerolipid + 2 oxidized [2Fe-2S]-[ferredoxin] + 2 H2O. It participates in lipid metabolism; polyunsaturated fatty acid biosynthesis. In terms of biological role, desaturase involved in fatty acid biosynthesis. Introduces a double bond at carbon 9 of stearoyl groups (18:0) attached to the sn-1 position of the glycerol moiety of membrane glycerolipids. Does not desaturate palmitic acid (16:0), palmitoleic acid (16:1) and cis-vaccenic acid (18:1). The polypeptide is sn-1 stearoyl-lipid 9-desaturase (Anabaena variabilis).